A 1232-amino-acid polypeptide reads, in one-letter code: Histone-lysine N-methyltransferase MECOM (1232 aa).

Residues 22–68 (PEIPLEEMPDADADGITSVPSLHIQEPCSPATSSESFTPKEGSPYKA) are disordered. A compositionally biased stretch (acidic residues) spans 25–34 (PLEEMPDADA). One can recognise an SET domain in the interval 80–192 (DEFELRESTM…PGEELLLFMK (113 aa)). Glycyl lysine isopeptide (Lys-Gly) (interchain with G-Cter in SUMO2) cross-links involve residues lysine 101 and lysine 192. Residues 191 to 442 (MKSEEDPHEP…NHFAAGGFFG (252 aa)) are interaction with SUV39H1 and probably MAPK9 and SMAD3. 5 C2H2-type zinc fingers span residues 211 to 238 (HRCE…STPH), 265 to 287 (QDCK…MLSH), 293 to 315 (YKCD…QMSH), 321 to 344 (YECE…RSQH), and 350 to 372 (HACP…KHIH). Lysine 294 participates in a covalent cross-link: Glycyl lysine isopeptide (Lys-Gly) (interchain with G-Cter in SUMO2). Glycyl lysine isopeptide (Lys-Gly) (interchain with G-Cter in SUMO2) cross-links involve residues lysine 369 and lysine 376. The C2H2-type 6 zinc finger occupies 378 to 400 (FICEVCHKSYTQFSNLCRHKRMH). The segment at 407-429 (IKCKDCGQMFSTTSSLNKHRRFC) adopts a C2H2-type 7; atypical zinc-finger fold. Residues lysine 432, lysine 525, lysine 545, lysine 549, and lysine 557 each participate in a glycyl lysine isopeptide (Lys-Gly) (interchain with G-Cter in SUMO2) cross-link. The interval 548–622 (SKHPPVGDNK…KCKENGKMFK (75 aa)) is disordered. The segment covering 562–577 (LPERSSEERPLEKISD) has biased composition (basic and acidic residues). Over residues 588 to 600 (STPSGSDLETTSG) the composition is skewed to polar residues. Positions 608 to 622 (ESDKEKCKENGKMFK) are enriched in basic and acidic residues. A Nuclear localization signal motif is present at residues 611–624 (KEKCKENGKMFKDK). Lysine 624 participates in a covalent cross-link: Glycyl lysine isopeptide (Lys-Gly) (interchain with G-Cter in SUMO2). The residue at position 626 (serine 626) is a Phosphoserine. Glycyl lysine isopeptide (Lys-Gly) (interchain with G-Cter in SUMO2) cross-links involve residues lysine 637, lysine 665, lysine 687, and lysine 723. Residues 720–823 (LPLKMEPQSP…DGSLQHARPT (104 aa)) form a disordered region. A Phosphoserine modification is found at serine 728. Glycyl lysine isopeptide (Lys-Gly) (interchain with G-Cter in SUMO2) cross-links involve residues lysine 733, lysine 734, and lysine 737. Serine 742 is modified (phosphoserine). A CTBP-binding motif 1 motif is present at residues 743–747 (PFDLT). Residues lysine 751, lysine 754, and lysine 762 each participate in a glycyl lysine isopeptide (Lys-Gly) (interchain with G-Cter in SUMO2) cross-link. The segment covering 758–773 (SGPSKPSGTPATSQDQ) has biased composition (polar residues). The CTBP-binding motif 2 signature appears at 774 to 778 (PLDLS). Glycyl lysine isopeptide (Lys-Gly) (interchain with G-Cter in SUMO2) cross-links involve residues lysine 789, lysine 802, and lysine 803. Positions 791–805 (TEPRKNHVFGEKKGS) are enriched in basic and acidic residues. Over residues 806 to 816 (NMDTRPSSDGS) the composition is skewed to polar residues. Glycyl lysine isopeptide (Lys-Gly) (interchain with G-Cter in SUMO2) cross-links involve residues lysine 837, lysine 846, lysine 848, and lysine 879. 3 C2H2-type zinc fingers span residues 914 to 936 (YTCR…LRTH), 942 to 965 (YRCK…RNIH), and 971 to 993 (FKCH…LKKH). Lysine 1020 participates in a covalent cross-link: Glycyl lysine isopeptide (Lys-Gly) (interchain with G-Cter in SUMO2). Residues 1032–1043 (IGNSNHGSQSPR) show a composition bias toward polar residues. The segment at 1032–1107 (IGNSNHGSQS…GVTRLDEEIP (76 aa)) is disordered. A phosphoserine mark is found at serine 1039 and serine 1041. The segment covering 1044–1059 (NMEERMNGSHFKDKKA) has biased composition (basic and acidic residues). Residues lysine 1055 and lysine 1058 each participate in a glycyl lysine isopeptide (Lys-Gly) (interchain with G-Cter in SUMO2) cross-link. Over residues 1068-1088 (LLDDEEVEDEVLLDEEDEDND) the composition is skewed to acidic residues. Residues 1089 to 1104 (IPGKPRKELGVTRLDE) show a composition bias toward basic and acidic residues. Residues lysine 1122, lysine 1129, lysine 1134, lysine 1151, lysine 1178, and lysine 1186 each participate in a glycyl lysine isopeptide (Lys-Gly) (interchain with G-Cter in SUMO2) cross-link.

Homooligomer. Interacts with CTBP1. Interacts with SMAD3 (via MH2 domain); the interaction is direct. Interacts with SMAD4; through interaction with SMAD3. Interacts with CREBBP, KAT2B and histone deacetylases. Interacts with MAPK8 and MAPK9; inhibits JNK signaling. Interacts with SUV39H1 (via SET domain); enhances MECOM transcriptional repression activity. May be acetylated by CREBBP and KAT2B.

It localises to the nucleus. It is found in the nucleus speckle. The protein resides in the cytoplasm. The catalysed reaction is L-lysyl(9)-[histone H3] + S-adenosyl-L-methionine = N(6)-methyl-L-lysyl(9)-[histone H3] + S-adenosyl-L-homocysteine + H(+). Its function is as follows. Functions as a transcriptional regulator binding to DNA sequences in the promoter region of target genes and regulating positively or negatively their expression. Oncogene which plays a role in development, cell proliferation and differentiation. May also play a role in apoptosis through regulation of the JNK and TGF-beta signaling. Involved in hematopoiesis. Functionally, displays histone methyltransferase activity and monomethylates 'Lys-9' of histone H3 (H3K9me1) in vitro. Probably catalyzes the monomethylation of free histone H3 in the cytoplasm which is then transported to the nucleus and incorporated into nucleosomes where SUV39H methyltransferases use it as a substrate to catalyze histone H3 'Lys-9' trimethylation. Likely to be one of the primary histone methyltransferases along with PRDM16 that direct cytoplasmic H3K9me1 methylation. The polypeptide is Histone-lysine N-methyltransferase MECOM (Mus musculus (Mouse)).